The following is a 147-amino-acid chain: MRNFGIILAHTYKNRLMSKAFLISTVITLAFMLVLTNMDPYVNMLRGTSEAFSAAVAGADSIQVSPFDEPIQPSTSFSRRIARNTSLILMEESHLAATQDASGGAWYVEHLTDEIIVCKFKVILILNSVREYTDVIADSIFKLSRGH.

To methylmalonyl-CoA mutase.

In Alkalihalophilus pseudofirmus (strain ATCC BAA-2126 / JCM 17055 / OF4) (Bacillus pseudofirmus), this protein is Methylmalonyl-CoA mutase homolog.